Here is a 154-residue protein sequence, read N- to C-terminus: Myoglobin (154 aa).

The Globin domain maps to 2-148 (GLSDGEWQLV…FRKDIAAKYK (147 aa)). Ser4 carries the post-translational modification Phosphoserine. His65 is a binding site for nitrite. His65 contributes to the O2 binding site. Phosphothreonine is present on Thr68. Residue His94 coordinates heme b.

Belongs to the globin family. Monomeric.

The protein resides in the cytoplasm. It is found in the sarcoplasm. The enzyme catalyses Fe(III)-heme b-[protein] + nitric oxide + H2O = Fe(II)-heme b-[protein] + nitrite + 2 H(+). It catalyses the reaction H2O2 + AH2 = A + 2 H2O. In terms of biological role, monomeric heme protein which primary function is to store oxygen and facilitate its diffusion within muscle tissues. Reversibly binds oxygen through a pentacoordinated heme iron and enables its timely and efficient release as needed during periods of heightened demand. Depending on the oxidative conditions of tissues and cells, and in addition to its ability to bind oxygen, it also has a nitrite reductase activity whereby it regulates the production of bioactive nitric oxide. Under stress conditions, like hypoxia and anoxia, it also protects cells against reactive oxygen species thanks to its pseudoperoxidase activity. The sequence is that of Myoglobin (MB) from Delphinus delphis (Short-beaked common dolphin).